The chain runs to 107 residues: L-amino-acid oxidase (107 aa).

35-38 (GPMR) contributes to the FAD binding site. The substrate site is built by R38 and H49.

This sequence belongs to the flavin monoamine oxidase family. FIG1 subfamily. As to quaternary structure, homodimer; non-covalently linked. The cofactor is FAD. Post-translationally, N-glycosylated. As to expression, expressed by the venom gland.

The protein resides in the secreted. The catalysed reaction is an L-alpha-amino acid + O2 + H2O = a 2-oxocarboxylate + H2O2 + NH4(+). It carries out the reaction L-leucine + O2 + H2O = 4-methyl-2-oxopentanoate + H2O2 + NH4(+). It catalyses the reaction L-phenylalanine + O2 + H2O = 3-phenylpyruvate + H2O2 + NH4(+). The enzyme catalyses L-tryptophan + O2 + H2O = indole-3-pyruvate + H2O2 + NH4(+). The catalysed reaction is L-methionine + O2 + H2O = 4-methylsulfanyl-2-oxobutanoate + H2O2 + NH4(+). It carries out the reaction L-isoleucine + O2 + H2O = (S)-3-methyl-2-oxopentanoate + H2O2 + NH4(+). It catalyses the reaction L-arginine + O2 + H2O = 5-guanidino-2-oxopentanoate + H2O2 + NH4(+). The enzyme catalyses L-histidine + O2 + H2O = 3-(imidazol-5-yl)pyruvate + H2O2 + NH4(+). In terms of biological role, catalyzes an oxidative deamination of predominantly hydrophobic and aromatic L-amino acids, thus producing hydrogen peroxide that may contribute to the diverse toxic effects of this enzyme. Shows high activity on L-Met, moderate activity on L-Trp, L-Leu, L-His, L-Phe, L-Arg, L-Ile, low activity on L-Val, L-Glu, L-Lys, L-Gln, L-Asn, L-Tyr, L-Ala, and no activity on L-Asp, L-Ser, L-Pro, L-Gly, L-Thr and L-Cys. Shows antimicrobial activity inhibiting the growth of both Gram-negative and Gram-positive bacteria. Also inhibits platelet aggregation induced by ADP or collagen. Effects of snake L-amino oxidases on platelets are controversial, since they either induce aggregation or inhibit agonist-induced aggregation. These different effects are probably due to different experimental conditions. This protein may also induce hemorrhage, hemolysis, edema, apoptosis, and have antiparasitic activities. This Macrovipera lebetinus (Levantine viper) protein is L-amino-acid oxidase.